We begin with the raw amino-acid sequence, 1377 residues long: DNA-directed RNA polymerase subunit beta'' (1377 aa).

Cys224, Cys294, Cys301, and Cys304 together coordinate Zn(2+).

It belongs to the RNA polymerase beta' chain family. RpoC2 subfamily. In plastids the minimal PEP RNA polymerase catalytic core is composed of four subunits: alpha, beta, beta', and beta''. When a (nuclear-encoded) sigma factor is associated with the core the holoenzyme is formed, which can initiate transcription. The cofactor is Zn(2+).

It is found in the plastid. The protein resides in the chloroplast. The enzyme catalyses RNA(n) + a ribonucleoside 5'-triphosphate = RNA(n+1) + diphosphate. Functionally, DNA-dependent RNA polymerase catalyzes the transcription of DNA into RNA using the four ribonucleoside triphosphates as substrates. The protein is DNA-directed RNA polymerase subunit beta'' of Calycanthus floridus var. glaucus (Eastern sweetshrub).